Reading from the N-terminus, the 109-residue chain is SIAFSRAVLAEFLATLLFVFFGLGSALNWPQAMPSVLQIAMAFGLAIGTLVQALGHVSGAHINPAVTVACLVGCHVSFLRAAFYVAAQLLGAVAGAALLHEITPPDIRR.

The Cytoplasmic portion of the chain corresponds to 1–6 (SIAFSR). A helical transmembrane segment spans residues 7-27 (AVLAEFLATLLFVFFGLGSAL). Residues 28 to 35 (NWPQAMPS) are Extracellular-facing. Residues 36–54 (VLQIAMAFGLAIGTLVQAL) traverse the membrane as a helical segment. At 55–59 (GHVSG) the chain is on the cytoplasmic side. Residues 60–69 (AHINPAVTVA) constitute an intramembrane region (discontinuously helical). The NPA 1 signature appears at 63 to 65 (NPA). Residues 70–80 (CLVGCHVSFLR) lie on the Cytoplasmic side of the membrane. The helical transmembrane segment at 81-102 (AAFYVAAQLLGAVAGAALLHEI) threads the bilayer. Over 103–109 (TPPDIRR) the chain is Extracellular.

The protein belongs to the MIP/aquaporin (TC 1.A.8) family. In terms of assembly, homotetramer. Serine phosphorylation is necessary and sufficient for expression at the apical membrane. Endocytosis is not phosphorylation-dependent. In terms of processing, N-glycosylated.

Its subcellular location is the apical cell membrane. It is found in the basolateral cell membrane. The protein localises to the cell membrane. It localises to the cytoplasmic vesicle membrane. The protein resides in the golgi apparatus. Its subcellular location is the trans-Golgi network membrane. It carries out the reaction H2O(in) = H2O(out). The catalysed reaction is glycerol(in) = glycerol(out). Its function is as follows. Forms a water-specific channel that provides the plasma membranes of renal collecting duct with high permeability to water, thereby permitting water to move in the direction of an osmotic gradient. Plays an essential role in renal water homeostasis. Could also be permeable to glycerol. In Equus caballus (Horse), this protein is Aquaporin-2.